Reading from the N-terminus, the 211-residue chain is SAGA-associated factor 11 homolog (211 aa).

Residues 115 to 136 (CTCPHCDRLVAAARFAPHLEKC) form an SGF11-type zinc finger. A disordered region spans residues 153–211 (TKEGASASSSSTSTYIQSGGNTGGTDDEDDVDWSSDKRKKKSTQNSRNNGSKKNNGKIF). The span at 157–166 (ASASSSSTST) shows a compositional bias: low complexity. At serine 187 the chain carries Phosphoserine. The span at 197–211 (NSRNNGSKKNNGKIF) shows a compositional bias: low complexity.

The protein belongs to the SGF11 family. In terms of assembly, component of some SAGA transcription coactivator-HAT complexes, at least composed of Ada2b, not/nonstop, Pcaf/Gcn5, Sgf11 and Spt3. Within the SAGA complex, Sgf11, e(y)2, and not/nonstop form an additional subcomplex of SAGA called the DUB module (deubiquitination module). Interacts directly with not/nonstop. Interacts with the AMEX complex component xmas-2. Interacts with Cbp80; important for promoter recruitment of Sgf11 that is not associated with the DUB module.

It localises to the nucleus. It is found in the nucleoplasm. Its subcellular location is the cytoplasm. In terms of biological role, component of the transcription regulatory histone acetylation (HAT) complex SAGA, a multiprotein complex that activates transcription by remodeling chromatin and mediating histone acetylation and deubiquitination. Within the SAGA complex, participates in a subcomplex that specifically deubiquitinates histone H2B. The SAGA complex is recruited to specific gene promoters by activators, where it is required for transcription. Required for nuclear receptor-mediated transactivation. Binds independently on SAGA to promoters in an RNA-dependent manner. Binds to mRNA and is essential for total mRNA export from the nucleus. Required to counteract heterochromatin silencing. Controls the development of neuronal connectivity in visual system by being required for accurate axon targeting in the optic lobe. Required for expression of ecdysone-induced genes such as br/broad. In Drosophila mojavensis (Fruit fly), this protein is SAGA-associated factor 11 homolog.